The sequence spans 408 residues: Putative transporter AmpG 2 (408 aa).

A run of 12 helical transmembrane segments spans residues 10 to 30 (YISN…IYLL), 49 to 69 (IGLF…GPLL), 84 to 104 (YCLI…TNFN), 109 to 129 (FIPF…YDML), 154 to 174 (FRIG…IISW), 177 to 197 (VYRS…IYPL), 224 to 244 (WLII…LSIM), 261 to 281 (LGYK…GGFL), 294 to 311 (ALIY…LYFY), 315 to 337 (ITSL…SPFF), 353 to 373 (IALI…ISGY), and 378 to 398 (LGWT…YILI).

This sequence belongs to the major facilitator superfamily.

Its subcellular location is the cell inner membrane. The protein is Putative transporter AmpG 2 (ampG2) of Rickettsia felis (strain ATCC VR-1525 / URRWXCal2) (Rickettsia azadi).